The sequence spans 525 residues: Bifunctional purine biosynthesis protein PurH (525 aa).

Residues 1–149 (MSDPVIKRAL…KNNESVTVVT (149 aa)) enclose the MGS-like domain.

It belongs to the PurH family.

The enzyme catalyses (6R)-10-formyltetrahydrofolate + 5-amino-1-(5-phospho-beta-D-ribosyl)imidazole-4-carboxamide = 5-formamido-1-(5-phospho-D-ribosyl)imidazole-4-carboxamide + (6S)-5,6,7,8-tetrahydrofolate. The catalysed reaction is IMP + H2O = 5-formamido-1-(5-phospho-D-ribosyl)imidazole-4-carboxamide. The protein operates within purine metabolism; IMP biosynthesis via de novo pathway; 5-formamido-1-(5-phospho-D-ribosyl)imidazole-4-carboxamide from 5-amino-1-(5-phospho-D-ribosyl)imidazole-4-carboxamide (10-formyl THF route): step 1/1. It functions in the pathway purine metabolism; IMP biosynthesis via de novo pathway; IMP from 5-formamido-1-(5-phospho-D-ribosyl)imidazole-4-carboxamide: step 1/1. This is Bifunctional purine biosynthesis protein PurH from Pelodictyon phaeoclathratiforme (strain DSM 5477 / BU-1).